We begin with the raw amino-acid sequence, 66 residues long: Antimicrobial peptide Eval967 (66 aa).

The N-terminal stretch at 1-22 (MKFSALLPVFFLLLAVIDYCQA) is a signal peptide. At L36 the chain carries Leucine amide. Positions 37 to 66 (GKRDVKTQKYVDIKRRDLDLDDMLSKLFED) are excised as a propeptide.

It belongs to the non-disulfide-bridged peptide (NDBP) superfamily. Short antimicrobial peptide (group 4) family. Expressed by the venom gland.

The protein localises to the secreted. Probable antimicrobial peptide. Has no inhibitory activity against herpes simplex virus type 1 (HSV-1). This is Antimicrobial peptide Eval967 from Euscorpiops validus (Scorpion).